The sequence spans 146 residues: Small ribosomal subunit protein bS16 (146 aa).

Basic and acidic residues predominate over residues 84–102; it reads SHLEAQKAAVERLGRRKDY. The disordered stretch occupies residues 84-146; the sequence is SHLEAQKAAV…DAPAAEATTE (63 aa). A compositionally biased stretch (low complexity) spans 110–119; it reads APKAAPVAEA. A compositionally biased stretch (acidic residues) spans 120–130; sequence PAEEAPAEEPA. Residues 131–146 show a composition bias toward low complexity; it reads AEASTDDAPAAEATTE.

Belongs to the bacterial ribosomal protein bS16 family.

This is Small ribosomal subunit protein bS16 from Rhodopirellula baltica (strain DSM 10527 / NCIMB 13988 / SH1).